Consider the following 868-residue polypeptide: Monofunctional pimaradiene synthase (868 aa).

Residues aspartate 620, aspartate 624, asparagine 764, threonine 768, and glutamate 772 each contribute to the Mg(2+) site.

This sequence belongs to the terpene synthase family. Tpsd subfamily. Mg(2+) is required as a cofactor.

The enzyme catalyses (+)-copalyl diphosphate = (-)-pimara-8(14),15-diene + diphosphate. It functions in the pathway terpene metabolism; oleoresin biosynthesis. Its function is as follows. Involved in defensive oleoresin formation in conifers in response to insect attack or other injury. Involved in diterpene (C20) olefins biosynthesis. Monofunctional enzyme lacking the DXDD motif in the class II active site relevant for the cyclization of geranylgeranyl diphosphate (GGPP). Requires (+)-copalyl diphosphate ((+)-CPP) as substrate, but no activity with GGPP or ent-CPP. Pimaradiene is the major products of the enzyme. This is Monofunctional pimaradiene synthase from Pinus banksiana (Jack pine).